The sequence spans 156 residues: Small ribosomal subunit protein uS7 (156 aa).

Belongs to the universal ribosomal protein uS7 family. Part of the 30S ribosomal subunit. Contacts proteins S9 and S11.

One of the primary rRNA binding proteins, it binds directly to 16S rRNA where it nucleates assembly of the head domain of the 30S subunit. Is located at the subunit interface close to the decoding center, probably blocks exit of the E-site tRNA. This chain is Small ribosomal subunit protein uS7, found in Prochlorococcus marinus (strain SARG / CCMP1375 / SS120).